Here is a 230-residue protein sequence, read N- to C-terminus: 6-carboxyhexanoate--CoA ligase (230 aa).

It belongs to the BioW family. In terms of assembly, homodimer. The cofactor is Mg(2+).

It catalyses the reaction heptanedioate + ATP + CoA = 6-carboxyhexanoyl-CoA + AMP + diphosphate. It participates in metabolic intermediate metabolism; pimeloyl-CoA biosynthesis; pimeloyl-CoA from pimelate: step 1/1. Functionally, catalyzes the transformation of pimelate into pimeloyl-CoA with concomitant hydrolysis of ATP to AMP. The sequence is that of 6-carboxyhexanoate--CoA ligase from Staphylococcus aureus (strain MRSA252).